Reading from the N-terminus, the 65-residue chain is Ferredoxin soy (65 aa).

One can recognise a 4Fe-4S ferredoxin-type domain in the interval 2–29; the sequence is GVQVDKERCVGAGMCALTAPDVFTQDDD. [3Fe-4S] cluster contacts are provided by cysteine 10, cysteine 16, and cysteine 55.

[3Fe-4S] cluster is required as a cofactor.

Its function is as follows. Electron transport protein for the cytochrome P-450-SOY system. The chain is Ferredoxin soy (soyB) from Streptomyces griseus.